A 1555-amino-acid chain; its full sequence is Glycogen debranching enzyme (1555 aa).

Ser87 bears the Phosphoserine mark. Residues Asp549, His552, and Asp650 contribute to the active site.

The protein belongs to the glycogen debranching enzyme family. In terms of assembly, monomer. Interacts with NHLRC1/malin. In terms of processing, the N-terminus is blocked. Post-translationally, ubiquitinated.

It localises to the cytoplasm. The catalysed reaction is Transfers a segment of a (1-&gt;4)-alpha-D-glucan to a new position in an acceptor, which may be glucose or a (1-&gt;4)-alpha-D-glucan.. It carries out the reaction Hydrolysis of (1-&gt;6)-alpha-D-glucosidic branch linkages in glycogen phosphorylase limit dextrin.. Multifunctional enzyme acting as 1,4-alpha-D-glucan:1,4-alpha-D-glucan 4-alpha-D-glycosyltransferase and amylo-1,6-glucosidase in glycogen degradation. The polypeptide is Glycogen debranching enzyme (AGL) (Oryctolagus cuniculus (Rabbit)).